Consider the following 118-residue polypeptide: MLRLILAVALVAACLAFPAAKDGPSPGFQKAFQNFNPNAAAGFGGNGMMGGAGMNPNMFNGAQGFQGFLPQPHQKRDSYQHGGYQHQQSFDNFQGSGGMNNDNSDDSFALRNFNNDGY.

The N-terminal stretch at Met-1 to Ala-16 is a signal peptide. The disordered stretch occupies residues Gln-63–Tyr-118. The span at Gln-85–Asp-102 shows a compositional bias: polar residues.

In terms of tissue distribution, expressed by the venom duct.

It localises to the secreted. The polypeptide is Turripeptide NCR-01 (Gemmula speciosa (Splendid gem-turris)).